The primary structure comprises 635 residues: 1-deoxy-D-xylulose-5-phosphate synthase (635 aa).

Thiamine diphosphate-binding positions include His74 and 115-117; that span reads AHS. Asp146 serves as a coordination point for Mg(2+). Residues 147 to 148, Asn176, Tyr283, and Glu365 each bind thiamine diphosphate; that span reads GA. Asn176 contacts Mg(2+).

The protein belongs to the transketolase family. DXPS subfamily. In terms of assembly, homodimer. It depends on Mg(2+) as a cofactor. Thiamine diphosphate is required as a cofactor.

The enzyme catalyses D-glyceraldehyde 3-phosphate + pyruvate + H(+) = 1-deoxy-D-xylulose 5-phosphate + CO2. The protein operates within metabolic intermediate biosynthesis; 1-deoxy-D-xylulose 5-phosphate biosynthesis; 1-deoxy-D-xylulose 5-phosphate from D-glyceraldehyde 3-phosphate and pyruvate: step 1/1. Catalyzes the acyloin condensation reaction between C atoms 2 and 3 of pyruvate and glyceraldehyde 3-phosphate to yield 1-deoxy-D-xylulose-5-phosphate (DXP). This is 1-deoxy-D-xylulose-5-phosphate synthase from Paraburkholderia xenovorans (strain LB400).